A 200-amino-acid polypeptide reads, in one-letter code: Peptidyl-tRNA hydrolase (200 aa).

Tyr-16 lines the tRNA pocket. Residue His-21 is the Proton acceptor of the active site. Positions 67, 69, and 115 each coordinate tRNA.

The protein belongs to the PTH family. As to quaternary structure, monomer.

The protein localises to the cytoplasm. The catalysed reaction is an N-acyl-L-alpha-aminoacyl-tRNA + H2O = an N-acyl-L-amino acid + a tRNA + H(+). Its function is as follows. Hydrolyzes ribosome-free peptidyl-tRNAs (with 1 or more amino acids incorporated), which drop off the ribosome during protein synthesis, or as a result of ribosome stalling. Functionally, catalyzes the release of premature peptidyl moieties from peptidyl-tRNA molecules trapped in stalled 50S ribosomal subunits, and thus maintains levels of free tRNAs and 50S ribosomes. This chain is Peptidyl-tRNA hydrolase, found in Prochlorococcus marinus (strain MIT 9312).